A 482-amino-acid polypeptide reads, in one-letter code: tRNA sulfurtransferase (482 aa).

One can recognise a THUMP domain in the interval 61 to 165; that stretch reads AEVLEILTHT…NDRLNQVLAS (105 aa). ATP is bound by residues 183-184, K265, G287, and Q296; that span reads LI. C344 and C456 are joined by a disulfide. The region spanning 404–482 is the Rhodanese domain; sequence VEEHAIVLDI…GFNNVKVYRP (79 aa). C456 functions as the Cysteine persulfide intermediate in the catalytic mechanism.

The protein belongs to the ThiI family.

The protein resides in the cytoplasm. It catalyses the reaction [ThiI sulfur-carrier protein]-S-sulfanyl-L-cysteine + a uridine in tRNA + 2 reduced [2Fe-2S]-[ferredoxin] + ATP + H(+) = [ThiI sulfur-carrier protein]-L-cysteine + a 4-thiouridine in tRNA + 2 oxidized [2Fe-2S]-[ferredoxin] + AMP + diphosphate. The catalysed reaction is [ThiS sulfur-carrier protein]-C-terminal Gly-Gly-AMP + S-sulfanyl-L-cysteinyl-[cysteine desulfurase] + AH2 = [ThiS sulfur-carrier protein]-C-terminal-Gly-aminoethanethioate + L-cysteinyl-[cysteine desulfurase] + A + AMP + 2 H(+). The protein operates within cofactor biosynthesis; thiamine diphosphate biosynthesis. Functionally, catalyzes the ATP-dependent transfer of a sulfur to tRNA to produce 4-thiouridine in position 8 of tRNAs, which functions as a near-UV photosensor. Also catalyzes the transfer of sulfur to the sulfur carrier protein ThiS, forming ThiS-thiocarboxylate. This is a step in the synthesis of thiazole, in the thiamine biosynthesis pathway. The sulfur is donated as persulfide by IscS. This Vibrio campbellii (strain ATCC BAA-1116) protein is tRNA sulfurtransferase.